The primary structure comprises 146 residues: Large ribosomal subunit protein uL15 (146 aa).

The interval 1–51 is disordered; it reads MKLHELKPAKGSRKVRNRVGRGTSSGNGKTSGRGQKGQKARSGGGVRLGFE. Basic residues predominate over residues 10-19; the sequence is KGSRKVRNRV. Composition is skewed to gly residues over residues 23 to 35 and 42 to 51; these read TSSGNGKTSGRGQ and SGGGVRLGFE.

Belongs to the universal ribosomal protein uL15 family. Part of the 50S ribosomal subunit.

Binds to the 23S rRNA. This chain is Large ribosomal subunit protein uL15, found in Streptococcus equi subsp. equi (strain 4047).